A 314-amino-acid polypeptide reads, in one-letter code: Transmembrane protein 178B (314 aa).

An N-terminal signal peptide occupies residues 1–24 (MRLLAGAGLCLALAALALLAVALS). Residues 32-83 (DARRHRDRCRKPGGKRNDPGYMYTPGQHLPLRGEPPSSRIRSPRGGEPGGVR) form a disordered region. Residues 36 to 45 (HRDRCRKPGG) are compositionally biased toward basic residues. The next 3 membrane-spanning stretches (helical) occupy residues 194 to 214 (AGFIGMAVSIILFGWMVGVLG), 228 to 248 (LLFLMGGTCCIISLCTCVAGI), and 274 to 294 (MFCAWGGLGLTLLSGFLCTLA).

This sequence belongs to the TMEM178 family.

The protein resides in the membrane. The sequence is that of Transmembrane protein 178B (tmem178b) from Xenopus tropicalis (Western clawed frog).